A 196-amino-acid polypeptide reads, in one-letter code: Rac-like GTP-binding protein RAC9 (196 aa).

13–20 is a GTP binding site; that stretch reads GDGAVGKT. The Effector region signature appears at 35-43; sequence YVPTVFDNF. GTP is bound by residues 60–64 and 118–121; these read DTAGQ and TKLD. Cysteine 193 carries the post-translational modification Cysteine methyl ester. Cysteine 193 carries the S-geranylgeranyl cysteine lipid modification. Positions 194–196 are cleaved as a propeptide — removed in mature form; the sequence is AFL.

Belongs to the small GTPase superfamily. Rho family.

It is found in the cytoplasm. It localises to the membrane. Inactive GDP-bound Rho GTPases reside in the cytosol, are found in a complex with Rho GDP-dissociation inhibitors (Rho GDIs), and are released from the GDI protein in order to translocate to membranes upon activation. The sequence is that of Rac-like GTP-binding protein RAC9 (RAC9) from Gossypium hirsutum (Upland cotton).